Reading from the N-terminus, the 183-residue chain is Inner membrane-spanning protein YciB (183 aa).

5 helical membrane-spanning segments follow: residues 22 to 44 (VQAA…RILF), 53 to 73 (IVGL…DLAF), 76 to 96 (WKVT…QYVF), 121 to 141 (LGWA…SQLF), and 153 to 173 (GFTG…YPYI).

The protein belongs to the YciB family.

Its subcellular location is the cell inner membrane. Plays a role in cell envelope biogenesis, maintenance of cell envelope integrity and membrane homeostasis. This Haemophilus ducreyi (strain 35000HP / ATCC 700724) protein is Inner membrane-spanning protein YciB.